A 174-amino-acid chain; its full sequence is Interferon gamma (174 aa).

Residues 1–23 (MNSTRCILALLLCLTQAMSGCYG) form the signal peptide. Q24 is modified (pyrrolidone carboxylic acid). Residues N39 and N106 are each glycosylated (N-linked (GlcNAc...) asparagine).

This sequence belongs to the type II (or gamma) interferon family. As to quaternary structure, homodimer. Interacts with IFNGR1 (via extracellular domain); this interaction promotes IFNGR1 dimerization. Released primarily from activated T lymphocytes.

The protein localises to the secreted. In terms of biological role, type II interferon produced by immune cells such as T-cells and NK cells that plays crucial roles in antimicrobial, antiviral, and antitumor responses by activating effector immune cells and enhancing antigen presentation. Primarily signals through the JAK-STAT pathway after interaction with its receptor IFNGR1 to affect gene regulation. Upon IFNG binding, IFNGR1 intracellular domain opens out to allow association of downstream signaling components JAK2, JAK1 and STAT1, leading to STAT1 activation, nuclear translocation and transcription of IFNG-regulated genes. Many of the induced genes are transcription factors such as IRF1 that are able to further drive regulation of a next wave of transcription. Plays a role in class I antigen presentation pathway by inducing a replacement of catalytic proteasome subunits with immunoproteasome subunits. In turn, increases the quantity, quality, and repertoire of peptides for class I MHC loading. Increases the efficiency of peptide generation also by inducing the expression of activator PA28 that associates with the proteasome and alters its proteolytic cleavage preference. Up-regulates as well MHC II complexes on the cell surface by promoting expression of several key molecules such as cathepsins B/CTSB, H/CTSH, and L/CTSL. Participates in the regulation of hematopoietic stem cells during development and under homeostatic conditions by affecting their development, quiescence, and differentiation. The protein is Interferon gamma (IFNG) of Phodopus sungorus (Striped hairy-footed hamster).